The following is a 206-amino-acid chain: MYKQDFPEGKEALNLEIRLGNKLVRFRKFTGKEKIYLPIQRHTDKVIKLIDKDSPPLEGDAVITNLKNVEIGVRTADCVPIILLGKEWVGAVHAGWRGLKKGIIAKTLKALKEEGEDDITALVFPSAKGCCYEVGKEFKEFFRRNLKERNGKLFFDPQREAVEQLRENGIKSILVWEKCTICSPELPSYRRDKTKERMLTSVVILF.

Zn(2+)-binding residues include H42, C78, and H93.

It belongs to the purine nucleoside phosphorylase YfiH/LACC1 family. Homodimer. It depends on Cu(2+) as a cofactor. The cofactor is Zn(2+).

The enzyme catalyses adenosine + phosphate = alpha-D-ribose 1-phosphate + adenine. The catalysed reaction is S-methyl-5'-thioadenosine + phosphate = 5-(methylsulfanyl)-alpha-D-ribose 1-phosphate + adenine. It catalyses the reaction inosine + phosphate = alpha-D-ribose 1-phosphate + hypoxanthine. It carries out the reaction adenosine + H2O + H(+) = inosine + NH4(+). Purine nucleoside enzyme that catalyzes the phosphorolysis of adenosine and inosine nucleosides, yielding D-ribose 1-phosphate and the respective free bases, adenine and hypoxanthine. Also catalyzes the phosphorolysis of S-methyl-5'-thioadenosine into adenine and S-methyl-5-thio-alpha-D-ribose 1-phosphate. Also has adenosine deaminase activity. In Aquifex aeolicus (strain VF5), this protein is Purine nucleoside phosphorylase aq_167.